The following is a 145-amino-acid chain: Small ribosomal subunit protein uS15 (145 aa).

The protein belongs to the universal ribosomal protein uS15 family. Part of the 30S ribosomal subunit.

The chain is Small ribosomal subunit protein uS15 from Thermoplasma acidophilum (strain ATCC 25905 / DSM 1728 / JCM 9062 / NBRC 15155 / AMRC-C165).